Reading from the N-terminus, the 66-residue chain is Protein translocase subunit SecE (66 aa).

A helical membrane pass occupies residues 29–49; sequence LVASTLVVVVAVFIFSPICLV.

This sequence belongs to the SecE/SEC61-gamma family. As to quaternary structure, component of the Sec protein translocase complex. Heterotrimer consisting of SecY, SecE and SecG subunits. The heterotrimers can form oligomers, although 1 heterotrimer is thought to be able to translocate proteins. Interacts with the ribosome. Interacts with SecDF, and other proteins may be involved. Interacts with SecA.

The protein localises to the cell inner membrane. Essential subunit of the Sec protein translocation channel SecYEG. Clamps together the 2 halves of SecY. May contact the channel plug during translocation. This Rickettsia montanensis protein is Protein translocase subunit SecE.